The following is a 116-amino-acid chain: Ferredoxin-like protein in nif region (116 aa).

One can recognise a 4Fe-4S ferredoxin-type domain in the interval 2 to 29 (AYTITSQCISCKLCSSVCPTGAIKIAEN). Positions 9, 12, 15, and 19 each coordinate iron-sulfur cluster.

This Nostoc sp. (strain PCC 7120 / SAG 25.82 / UTEX 2576) protein is Ferredoxin-like protein in nif region (fdxN).